We begin with the raw amino-acid sequence, 328 residues long: MDVSLLLNVEGVKKTILHGGTGELPSFITGSRVTFHFRTMKCDDERTVIDDSKQVGQPMSIIIGNMFKLEVWETLLTSMRLGEVAEFWCDTIHTGVYPMLSRSLRQVAEGKDPTSWHVHTCGLANMFAYHTLGYEDLDELQKEPQPLVFLIELLQVEAPNEYQRETWNLNNEERMQAVPLLHGEGNRLYKLGRYDQAATKYQEAIVCLRNLQTKEKPWEVEWLKLEKMINTLILNYCQCLLKKEEYYEVLEHTSDILRHHPGIVKAYYMRARAHAEVWNAEEAKADLEKVLELEPSMRKAVLRELRLLESRLADKQEEERQRCRSMLG.

A PPIase FKBP-type domain is found at 53 to 145 (KQVGQPMSII…DLDELQKEPQ (93 aa)). TPR repeat units lie at residues 178-211 (VPLLHGEGNRLYKLGRYDQAATKYQEAIVCLRNL), 230-263 (NTLILNYCQCLLKKEEYYEVLEHTSDILRHHPGI), and 264-297 (VKAYYMRARAHAEVWNAEEAKADLEKVLELEPSM).

Interacts with NUB1.

The protein resides in the cytoplasm. It is found in the nucleus. May be important in protein trafficking and/or protein folding and stabilization. The protein is Aryl-hydrocarbon-interacting protein-like 1 (Aipl1) of Mus musculus (Mouse).